The sequence spans 436 residues: tRNA-2-methylthio-N(6)-dimethylallyladenosine synthase (436 aa).

Positions 5-121 (RKLFIKTYGC…LPDMLERTEG (117 aa)) constitute an MTTase N-terminal domain. [4Fe-4S] cluster contacts are provided by Cys14, Cys50, Cys84, Cys158, Cys162, and Cys165. In terms of domain architecture, Radical SAM core spans 144-373 (ALRGPTAFLT…LGEQQRAAQA (230 aa)). A TRAM domain is found at 373–435 (AAMVGRELGV…PNSLAGERIG (63 aa)).

The protein belongs to the methylthiotransferase family. MiaB subfamily. Monomer. Requires [4Fe-4S] cluster as cofactor.

Its subcellular location is the cytoplasm. It catalyses the reaction N(6)-dimethylallyladenosine(37) in tRNA + (sulfur carrier)-SH + AH2 + 2 S-adenosyl-L-methionine = 2-methylsulfanyl-N(6)-dimethylallyladenosine(37) in tRNA + (sulfur carrier)-H + 5'-deoxyadenosine + L-methionine + A + S-adenosyl-L-homocysteine + 2 H(+). In terms of biological role, catalyzes the methylthiolation of N6-(dimethylallyl)adenosine (i(6)A), leading to the formation of 2-methylthio-N6-(dimethylallyl)adenosine (ms(2)i(6)A) at position 37 in tRNAs that read codons beginning with uridine. The sequence is that of tRNA-2-methylthio-N(6)-dimethylallyladenosine synthase from Cereibacter sphaeroides (strain ATCC 17025 / ATH 2.4.3) (Rhodobacter sphaeroides).